The sequence spans 943 residues: Isoleucine--tRNA ligase (943 aa).

Residues 58-68 carry the 'HIGH' region motif; it reads PYANGNIHIGH. Glutamate 567 is a binding site for L-isoleucyl-5'-AMP. The 'KMSKS' region motif lies at 608 to 612; it reads KMSKS. Lysine 611 contacts ATP. The Zn(2+) site is built by cysteine 906, cysteine 909, cysteine 926, and cysteine 929.

It belongs to the class-I aminoacyl-tRNA synthetase family. IleS type 1 subfamily. As to quaternary structure, monomer. It depends on Zn(2+) as a cofactor.

Its subcellular location is the cytoplasm. The catalysed reaction is tRNA(Ile) + L-isoleucine + ATP = L-isoleucyl-tRNA(Ile) + AMP + diphosphate. Catalyzes the attachment of isoleucine to tRNA(Ile). As IleRS can inadvertently accommodate and process structurally similar amino acids such as valine, to avoid such errors it has two additional distinct tRNA(Ile)-dependent editing activities. One activity is designated as 'pretransfer' editing and involves the hydrolysis of activated Val-AMP. The other activity is designated 'posttransfer' editing and involves deacylation of mischarged Val-tRNA(Ile). The chain is Isoleucine--tRNA ligase from Pseudomonas savastanoi pv. phaseolicola (strain 1448A / Race 6) (Pseudomonas syringae pv. phaseolicola (strain 1448A / Race 6)).